A 338-amino-acid chain; its full sequence is MIKQLYKNITICTLALSTTFTVLPATSYAKINSEIKAVSEKNLDGDTKMYTRTATTSDSQKNITQSLQFNFLTEPNYDKETVFIKAKGTIGSGLRILDPNGYWNSTLRWPGSYSVSIQNVDDNNNTNVTDFAPKNQDESREVKYTYGYKTGGDFSINRGGLTGNITKESNYSETISYQQPSYRTLLDQSTSHKGVGWKVEAHLINNMGHDHTRQLTNDSDNRTKSEIFSLTRNGNLWAKDNFTPKNKMPVTVSEGFNPEFLAVMSHDKKDEGKSKFVVHYKRSMDEFKIDWNRHGFWGYWSGENHVDKKEEKLSALYEVDWKTHNVKFVKVLNDNEKK.

A signal peptide spans 1-29; that stretch reads MIKQLYKNITICTLALSTTFTVLPATSYA.

Belongs to the aerolysin family.

This is an uncharacterized protein from Staphylococcus aureus (strain MSSA476).